Consider the following 730-residue polypeptide: Protein folded gastrulation (730 aa).

Residues Met1–Asn21 form the signal peptide. Asn51 and Asn193 each carry an N-linked (GlcNAc...) asparagine glycan. The span at Thr197–Thr211 shows a compositional bias: low complexity. Residues Thr197–Ala222 form a disordered region. Asn252 and Asn289 each carry an N-linked (GlcNAc...) asparagine glycan. The span at Glu361–Thr385 shows a compositional bias: acidic residues. The interval Glu361 to Ile424 is disordered. Over residues Thr386 to Ser415 the composition is skewed to low complexity. N-linked (GlcNAc...) asparagine glycosylation is present at Asn459. 2 disordered regions span residues Glu474–Lys526 and Lys545–Thr583. Positions Ser478 to Pro491 are enriched in low complexity. Positions Asp504–Ile513 are enriched in polar residues. Residues Thr567–Thr583 are compositionally biased toward low complexity. N-linked (GlcNAc...) asparagine glycans are attached at residues Asn590 and Asn639. Low complexity predominate over residues Ser663–Thr676. Positions Ser663–Pro683 are disordered. Asn678 carries N-linked (GlcNAc...) asparagine glycosylation.

In terms of processing, may be highly O-glycosylated in its Ser/Thr-rich C-terminal part. Expressed in the invagination primordia in a pattern that precisely precedes the pattern of constrictions.

The protein localises to the secreted. The protein resides in the extracellular space. It is found in the extracellular matrix. In terms of biological role, coordinates cell shape changes during formation of the ventral furrow and invagination of the posterior midgut primordium, by inducing apical constriction of cells in spatially and temporally defined manners. Could function as a secreted signal to initiate apical constriction by acting as a ligand for an unidentified G protein-coupled receptor, which in turn activates the G protein alpha subunit encoded by concertina, in neighboring cells. Such an intracellular pathway would ultimately induce contraction of the apical actin-myosin network. In the ventral furrow, fog appears to ensure that all the cells initiate constriction within several minutes of each other. In the posterior midgut invagination, fog appears to direct the ordered progression of constriction initiations out from a central region and also to delimit the peripheral extent of this spreading. This Drosophila melanogaster (Fruit fly) protein is Protein folded gastrulation (fog).